The primary structure comprises 141 residues: Large ribosomal subunit protein uL11 (141 aa).

The protein belongs to the universal ribosomal protein uL11 family. Part of the ribosomal stalk of the 50S ribosomal subunit. Interacts with L10 and the large rRNA to form the base of the stalk. L10 forms an elongated spine to which L12 dimers bind in a sequential fashion forming a multimeric L10(L12)X complex. In terms of processing, one or more lysine residues are methylated.

Functionally, forms part of the ribosomal stalk which helps the ribosome interact with GTP-bound translation factors. This chain is Large ribosomal subunit protein uL11, found in Streptococcus suis (strain 98HAH33).